The following is a 64-amino-acid chain: Conotoxin reg3.16 (64 aa).

A signal peptide spans 1–19 (MSKLGVFLTICLLLFPLTA). Positions 20–49 (LQLDGDQPADKPAQRKLKILPKRKHWTRFT) are excised as a propeptide. 3 cysteine pairs are disulfide-bonded: Cys50-Cys64, Cys51-Cys60, and Cys56-Cys63.

Belongs to the conotoxin M superfamily. Expressed by the venom duct.

It localises to the secreted. This is Conotoxin reg3.16 from Conus regius (Crown cone).